A 107-amino-acid chain; its full sequence is Integration host factor subunit alpha (107 aa).

It belongs to the bacterial histone-like protein family. Heterodimer of an alpha and a beta chain.

Functionally, this protein is one of the two subunits of integration host factor, a specific DNA-binding protein that functions in genetic recombination as well as in transcriptional and translational control. This Brucella abortus (strain S19) protein is Integration host factor subunit alpha.